Here is a 114-residue protein sequence, read N- to C-terminus: UPF0102 protein Amet_2739 (114 aa).

The protein belongs to the UPF0102 family.

In Alkaliphilus metalliredigens (strain QYMF), this protein is UPF0102 protein Amet_2739.